A 459-amino-acid polypeptide reads, in one-letter code: tRNA modification GTPase MnmE (459 aa).

Positions 22, 85, and 124 each coordinate (6S)-5-formyl-5,6,7,8-tetrahydrofolate. A TrmE-type G domain is found at 221–380 (GLSTVIVGRP…LEIQIKDLFF (160 aa)). Residue Asn-231 participates in K(+) binding. GTP contacts are provided by residues 231-236 (NVGKSS), 250-256 (TEVAGTT), and 275-278 (DTAG). Ser-235 serves as a coordination point for Mg(2+). The K(+) site is built by Thr-250, Val-252, and Thr-255. Residue Thr-256 participates in Mg(2+) binding. Lys-459 is a binding site for (6S)-5-formyl-5,6,7,8-tetrahydrofolate.

It belongs to the TRAFAC class TrmE-Era-EngA-EngB-Septin-like GTPase superfamily. TrmE GTPase family. In terms of assembly, homodimer. Heterotetramer of two MnmE and two MnmG subunits. It depends on K(+) as a cofactor.

The protein resides in the cytoplasm. Functionally, exhibits a very high intrinsic GTPase hydrolysis rate. Involved in the addition of a carboxymethylaminomethyl (cmnm) group at the wobble position (U34) of certain tRNAs, forming tRNA-cmnm(5)s(2)U34. The chain is tRNA modification GTPase MnmE from Staphylococcus epidermidis (strain ATCC 35984 / DSM 28319 / BCRC 17069 / CCUG 31568 / BM 3577 / RP62A).